A 142-amino-acid chain; its full sequence is Small ribosomal subunit protein uS12 (142 aa).

The interval Met1–Gln44 is disordered. Over residues Ala7–His18 the composition is skewed to basic residues. Basic and acidic residues predominate over residues Arg19 to Pro38.

This sequence belongs to the universal ribosomal protein uS12 family. Part of the 30S ribosomal subunit.

In terms of biological role, with S4 and S5 plays an important role in translational accuracy. Located at the interface of the 30S and 50S subunits. In Haloarcula marismortui (strain ATCC 43049 / DSM 3752 / JCM 8966 / VKM B-1809) (Halobacterium marismortui), this protein is Small ribosomal subunit protein uS12.